Consider the following 644-residue polypeptide: Exoribonuclease 2 (644 aa).

The region spanning 189–516 (REDLTALNFV…NHRLLKAVIT (328 aa)) is the RNB domain. Residues 561–643 (DIRFNAEIID…ETRGIVAKPA (83 aa)) enclose the S1 motif domain.

The protein belongs to the RNR ribonuclease family. RNase II subfamily.

The protein localises to the cytoplasm. The enzyme catalyses Exonucleolytic cleavage in the 3'- to 5'-direction to yield nucleoside 5'-phosphates.. Its function is as follows. Involved in mRNA degradation. Hydrolyzes single-stranded polyribonucleotides processively in the 3' to 5' direction. The protein is Exoribonuclease 2 of Pectobacterium atrosepticum (strain SCRI 1043 / ATCC BAA-672) (Erwinia carotovora subsp. atroseptica).